A 480-amino-acid polypeptide reads, in one-letter code: Gamma-aminobutyric acid receptor subunit rho-1 (480 aa).

A signal peptide spans 1-21 (MLAVQNMKFGIFLLWWGWVLA). Topologically, residues 22-281 (AESTAHWPGR…LYINFTLRRH (260 aa)) are extracellular. Residues 29 to 38 (PGREVHEPSR) show a composition bias toward basic and acidic residues. Residues 29–67 (PGREVHEPSRKGSRPQRQRRGAHDDAHKQGSPILRRSSD) are disordered. Residues 39–48 (KGSRPQRQRR) show a composition bias toward basic residues. Arg126 is a 4-aminobutanoate binding site. Asn141 carries N-linked (GlcNAc...) asparagine glycosylation. Ser190 serves as a coordination point for 4-aminobutanoate. Cys199 and Cys213 are joined by a disulfide. A 4-aminobutanoate-binding site is contributed by Glu218. Asn235 and Asn275 each carry an N-linked (GlcNAc...) asparagine glycan. Residues 282–302 (IFFFLLQTYFPATLMVMLSWV) traverse the membrane as a helical segment. The Cytoplasmic portion of the chain corresponds to 303 to 314 (SFWIDRRAVPAR). A helical transmembrane segment spans residues 315–335 (VPLGITTVLTMSTIITGVNAS). Over 336–346 (MPRVSYIKAVD) the chain is Extracellular. A helical transmembrane segment spans residues 347-367 (IYLWVSFVFVFLSVLEYAAVN). The Cytoplasmic portion of the chain corresponds to 368 to 458 (YLTTVQERKE…MRINTHAIDK (91 aa)). A helical membrane pass occupies residues 459–479 (YSRIIFPAAYILFNLIYWSIF). Ser480 is a topological domain (extracellular).

It belongs to the ligand-gated ion channel (TC 1.A.9) family. Gamma-aminobutyric acid receptor (TC 1.A.9.5) subfamily. GABRR1 sub-subfamily. Three rho subunits (rho-1/GBRR1, rho-2/GBRR2 and rho-3/GBRR3) coassemble either to form functional homopentamers or heteropentamers. Rho-1/GBRR1 subunits can also associate with alpha-1/GBRA1 subunits to form a functional GABAAR. Interacts with SQSTM1. Expressed in the cerebellum.

The protein localises to the postsynaptic cell membrane. It localises to the cell membrane. It catalyses the reaction chloride(in) = chloride(out). With respect to regulation, inhibited by TPMPA, a rho-specific antagonist, when forming a homopentamer. In contrast with other GABAARs, rho-1 GABAAR is not inhibited by bicuculline when forming a homopentamer. Functionally, rho subunit of the pentameric ligand-gated chloride channels responsible for mediating the effects of gamma-aminobutyric acid (GABA), the major inhibitory neurotransmitter in the brain. Rho-containing GABA-gated chloride channels are a subclass of GABA(A) receptors (GABAARs) entirely composed of rho subunits, where GABA molecules bind at the rho intersubunit interfaces. When activated by GABA, rho-GABAARs selectively allow the flow of chloride anions across the cell membrane down their electrochemical gradient. Rho-1 subunits are primarily expressed in retina where rho-1-containing GABAARs play a role in retinal neurotransmission. Rho-1 GABAARs are also involved in neuronal tonic (extrasynaptic) and phasic (synaptic) transmission in the Purkinje neurons of the cerebellum. Rho-1 GABAARs may also contribute to the regulation of glial development in the cerebellum by controlling extrasynaptic transmission. The protein is Gamma-aminobutyric acid receptor subunit rho-1 of Mus musculus (Mouse).